A 122-amino-acid polypeptide reads, in one-letter code: Large ribosomal subunit protein uL14 (122 aa).

Belongs to the universal ribosomal protein uL14 family. In terms of assembly, part of the 50S ribosomal subunit. Forms a cluster with proteins L3 and L19. In the 70S ribosome, L14 and L19 interact and together make contacts with the 16S rRNA in bridges B5 and B8.

In terms of biological role, binds to 23S rRNA. Forms part of two intersubunit bridges in the 70S ribosome. In Bordetella avium (strain 197N), this protein is Large ribosomal subunit protein uL14.